We begin with the raw amino-acid sequence, 731 residues long: Penicillin-binding protein 2a (731 aa).

Residues 1–56 lie on the Cytoplasmic side of the membrane; that stretch reads MKLDKLFEKFLSLFKKETSELEDSDSTILRRSRSDRKKLAQVGPIRKFWRRYHLTK. A helical; Signal-anchor for type II membrane protein membrane pass occupies residues 57-77; sequence IILILGLSAGLLVGIYLFAVA. Residues 78–156 are hydrophobic; associated with cytoplasmic membrane. Required for transglycosylase activity, but not for lipid II binding; sequence KSTNVNDLQN…FLAIVTAGRS (79 aa). The segment at 78–300 is transglycosylase; that stretch reads KSTNVNDLQN…SQLHDKYEGK (223 aa). The Extracellular portion of the chain corresponds to 78 to 731; it reads KSTNVNDLQN…IWDSIVNLFR (654 aa). Glu-131 functions as the Proton donor; for transglycosylase activity in the catalytic mechanism. The interval 301-731 is transpeptidase; sequence ISDYRYPSYF…IWDSIVNLFR (431 aa). Ser-410 serves as the catalytic Acyl-ester intermediate; for transpeptidase activity. Residues 674–694 are disordered; that stretch reads ANTKRQVQTNDNSQTDDNLSD. Residues 676–690 are compositionally biased toward polar residues; the sequence is TKRQVQTNDNSQTDD.

In the N-terminal section; belongs to the glycosyltransferase 51 family. This sequence in the C-terminal section; belongs to the transpeptidase family. As to quaternary structure, homodimer. May also form higher order oligomers. Self-association may depend on its transmembrane and/or cytoplasmic regions. Interacts with MacP; interaction is required for the function of this protein.

It is found in the cell membrane. Its subcellular location is the secreted. The protein resides in the cell wall. The catalysed reaction is Preferential cleavage: (Ac)2-L-Lys-D-Ala-|-D-Ala. Also transpeptidation of peptidyl-alanyl moieties that are N-acyl substituents of D-alanine.. It catalyses the reaction [GlcNAc-(1-&gt;4)-Mur2Ac(oyl-L-Ala-gamma-D-Glu-L-Lys-D-Ala-D-Ala)](n)-di-trans,octa-cis-undecaprenyl diphosphate + beta-D-GlcNAc-(1-&gt;4)-Mur2Ac(oyl-L-Ala-gamma-D-Glu-L-Lys-D-Ala-D-Ala)-di-trans,octa-cis-undecaprenyl diphosphate = [GlcNAc-(1-&gt;4)-Mur2Ac(oyl-L-Ala-gamma-D-Glu-L-Lys-D-Ala-D-Ala)](n+1)-di-trans,octa-cis-undecaprenyl diphosphate + di-trans,octa-cis-undecaprenyl diphosphate + H(+). It participates in cell wall biogenesis; peptidoglycan biosynthesis. Cell wall formation. Synthesis of cross-linked peptidoglycan (PG) from the lipid intermediates. Binds dansylated lipid II and catalyzes the polymerization of glycan chains. Hydrolyzes S2d (N-benzoyl-D-alanylmercaptoacetic acid) molecule, a synthetic thiolester analog of cell wall stem peptide. Active against bocillin, a fluorescent penicillin. No transpeptidase activity with non-fluorescent lysine-containing lipid II as substrate. The sequence is that of Penicillin-binding protein 2a from Streptococcus pneumoniae serotype 2 (strain D39 / NCTC 7466).